A 510-amino-acid chain; its full sequence is Probable mannosyl-oligosaccharide alpha-1,2-mannosidase 1B (510 aa).

The N-terminal stretch at 1–21 is a signal peptide; sequence MHFSSLSLPLTALSLVTPSLA. 4 N-linked (GlcNAc...) asparagine glycosylation sites follow: Asn-35, Asn-95, Asn-182, and Asn-249. A disulfide bond links Cys-332 and Cys-361. The N-linked (GlcNAc...) asparagine glycan is linked to Asn-366. The active-site Proton donor is the Glu-375. Residue Thr-501 coordinates Ca(2+).

This sequence belongs to the glycosyl hydrolase 47 family. In terms of assembly, monomer. Requires Ca(2+) as cofactor. Mg(2+) serves as cofactor.

The protein resides in the cytoplasmic vesicle lumen. The enzyme catalyses N(4)-(alpha-D-Man-(1-&gt;2)-alpha-D-Man-(1-&gt;2)-alpha-D-Man-(1-&gt;3)-[alpha-D-Man-(1-&gt;2)-alpha-D-Man-(1-&gt;3)-[alpha-D-Man-(1-&gt;2)-alpha-D-Man-(1-&gt;6)]-alpha-D-Man-(1-&gt;6)]-beta-D-Man-(1-&gt;4)-beta-D-GlcNAc-(1-&gt;4)-beta-D-GlcNAc)-L-asparaginyl-[protein] (N-glucan mannose isomer 9A1,2,3B1,2,3) + 4 H2O = N(4)-(alpha-D-Man-(1-&gt;3)-[alpha-D-Man-(1-&gt;3)-[alpha-D-Man-(1-&gt;6)]-alpha-D-Man-(1-&gt;6)]-beta-D-Man-(1-&gt;4)-beta-D-GlcNAc-(1-&gt;4)-beta-D-GlcNAc)-L-asparaginyl-[protein] (N-glucan mannose isomer 5A1,2) + 4 beta-D-mannose. It carries out the reaction N(4)-(alpha-D-Man-(1-&gt;2)-alpha-D-Man-(1-&gt;2)-alpha-D-Man-(1-&gt;3)-[alpha-D-Man-(1-&gt;3)-[alpha-D-Man-(1-&gt;2)-alpha-D-Man-(1-&gt;6)]-alpha-D-Man-(1-&gt;6)]-beta-D-Man-(1-&gt;4)-beta-D-GlcNAc-(1-&gt;4)-beta-D-GlcNAc)-L-asparaginyl-[protein] (N-glucan mannose isomer 8A1,2,3B1,3) + 3 H2O = N(4)-(alpha-D-Man-(1-&gt;3)-[alpha-D-Man-(1-&gt;3)-[alpha-D-Man-(1-&gt;6)]-alpha-D-Man-(1-&gt;6)]-beta-D-Man-(1-&gt;4)-beta-D-GlcNAc-(1-&gt;4)-beta-D-GlcNAc)-L-asparaginyl-[protein] (N-glucan mannose isomer 5A1,2) + 3 beta-D-mannose. It functions in the pathway protein modification; protein glycosylation. Its function is as follows. Involved in the maturation of Asn-linked oligosaccharides. Progressively trims alpha-1,2-linked mannose residues from Man(9)GlcNAc(2) to produce Man(5)GlcNAc(2). In Aspergillus flavus (strain ATCC 200026 / FGSC A1120 / IAM 13836 / NRRL 3357 / JCM 12722 / SRRC 167), this protein is Probable mannosyl-oligosaccharide alpha-1,2-mannosidase 1B (mns1B).